Reading from the N-terminus, the 420-residue chain is Gamma-glutamyl phosphate reductase (420 aa).

Belongs to the gamma-glutamyl phosphate reductase family.

The protein resides in the cytoplasm. The catalysed reaction is L-glutamate 5-semialdehyde + phosphate + NADP(+) = L-glutamyl 5-phosphate + NADPH + H(+). The protein operates within amino-acid biosynthesis; L-proline biosynthesis; L-glutamate 5-semialdehyde from L-glutamate: step 2/2. Catalyzes the NADPH-dependent reduction of L-glutamate 5-phosphate into L-glutamate 5-semialdehyde and phosphate. The product spontaneously undergoes cyclization to form 1-pyrroline-5-carboxylate. The sequence is that of Gamma-glutamyl phosphate reductase from Acidiphilium cryptum (strain JF-5).